The sequence spans 198 residues: Glycerol-3-phosphate acyltransferase (198 aa).

The next 4 helical transmembrane spans lie at 3–23 (VEWLLIPFAYLLGSVSSAVIV), 81–101 (LFAAIGFAAFVGHLYPVFFQF), 113–133 (VLLGFAWPVGLMALLTWIGVA), and 153–175 (YVWLWLGSAELVVATLFMSMLLV).

Belongs to the PlsY family. As to quaternary structure, probably interacts with PlsX.

The protein localises to the cell inner membrane. The enzyme catalyses an acyl phosphate + sn-glycerol 3-phosphate = a 1-acyl-sn-glycero-3-phosphate + phosphate. The protein operates within lipid metabolism; phospholipid metabolism. Functionally, catalyzes the transfer of an acyl group from acyl-phosphate (acyl-PO(4)) to glycerol-3-phosphate (G3P) to form lysophosphatidic acid (LPA). This enzyme utilizes acyl-phosphate as fatty acyl donor, but not acyl-CoA or acyl-ACP. The sequence is that of Glycerol-3-phosphate acyltransferase from Methylococcus capsulatus (strain ATCC 33009 / NCIMB 11132 / Bath).